We begin with the raw amino-acid sequence, 470 residues long: Nitric oxide synthase, inducible (470 aa).

L-arginine is bound by residues W2, Y3, and E7. R11, W93, and F106 together coordinate (6R)-L-erythro-5,6,7,8-tetrahydrobiopterin. Y121 contacts heme b. The calmodulin-binding stretch occupies residues 145–165 (FKAVARAALFSSTLMSRVLAN). In terms of domain architecture, Flavodoxin-like spans 169–307 (CTVLYATETG…AFSAWALTAL (139 aa)). The FMN site is built by T175, E176, T177, K179, S180, S221, T222, S258, C265, E291, and Q295. Position 380 (R380) interacts with NADP(+). H403 serves as a coordination point for FAD. T440 serves as a coordination point for NADP(+).

The protein belongs to the NOS family. As to quaternary structure, homodimer. Requires heme b as cofactor. The cofactor is FAD. FMN is required as a cofactor. It depends on (6R)-L-erythro-5,6,7,8-tetrahydrobiopterin as a cofactor.

The protein resides in the cytoplasm. The protein localises to the cytosol. It carries out the reaction 2 L-arginine + 3 NADPH + 4 O2 + H(+) = 2 L-citrulline + 2 nitric oxide + 3 NADP(+) + 4 H2O. Its activity is regulated as follows. Not stimulated by calcium/calmodulin. Produces nitric oxide (NO) which is a messenger molecule with diverse functions throughout the body. In macrophages, NO mediates tumoricidal and bactericidal actions. Also has nitrosylase activity and mediates cysteine S-nitrosylation of cytoplasmic target proteins such COX2. This is Nitric oxide synthase, inducible (nos2) from Oncorhynchus mykiss (Rainbow trout).